The chain runs to 428 residues: MKTSLFKSLYFQVLTAIAIGILLGHFYPELGAQMKPLGDAFVKLIKMIIAPVIFCTVVTGIAGMESMKAVGRTGAVALLYFEVVSTIALIIGLIIVNVMQPGAGMNVDPSTLDAKAVAIYAEQAKDQGIVAFLLDVIPGSVIGAFASGNILQVLLFAVLFGFALHRLGSKGQLIFNVIESFSQVIFGIINMIMRLAPIGAFGAMAFTIGKYGVGTLIQLGQLIICFYITCILFVVVVLGSIARATGFNIFKFIRYIREELLIVLGTSSSESALPRMLDKMEKLGCRKSVVGLVIPTGYSFNLDGTSIYLTMAAVFIAQATNTHMDIFHQITLLVVLLLSSKGAAGVTGSGFIVLAATISAVGHLPIAGLALILGIDRFMSEARALTNLIGNGVATVVVAKWVKELDHKKLDDTLNNRVPDSKTQGLSS.

8 consecutive transmembrane segments (helical) span residues 8 to 28 (SLYF…HFYP), 44 to 64 (LIKM…IAGM), 76 to 96 (VALL…LIIV), 142 to 162 (IGAF…LFGF), 184 to 204 (VIFG…FGAM), 222 to 242 (LIIC…GSIA), 326 to 346 (IFHQ…AAGV), and 352 to 372 (IVLA…LALI).

It belongs to the dicarboxylate/amino acid:cation symporter (DAACS) (TC 2.A.23) family.

Its subcellular location is the cell inner membrane. Its function is as follows. Responsible for the transport of dicarboxylates such as succinate, fumarate, and malate from the periplasm across the membrane. This is C4-dicarboxylate transport protein from Enterobacter sp. (strain 638).